We begin with the raw amino-acid sequence, 95 residues long: Large ribosomal subunit protein bL25 (95 aa).

The protein belongs to the bacterial ribosomal protein bL25 family. In terms of assembly, part of the 50S ribosomal subunit; part of the 5S rRNA/L5/L18/L25 subcomplex. Contacts the 5S rRNA. Binds to the 5S rRNA independently of L5 and L18.

This is one of the proteins that binds to the 5S RNA in the ribosome where it forms part of the central protuberance. The chain is Large ribosomal subunit protein bL25 from Shewanella piezotolerans (strain WP3 / JCM 13877).